A 273-amino-acid polypeptide reads, in one-letter code: Dermonecrotic toxin LdSicTox-alphaIB1bii (273 aa).

Histidine 5 is a catalytic residue. 2 residues coordinate Mg(2+): glutamate 25 and aspartate 27. Histidine 41 acts as the Nucleophile in catalysis. 2 disulfides stabilise this stretch: cysteine 45–cysteine 51 and cysteine 47–cysteine 190. Aspartate 85 lines the Mg(2+) pocket. An N-linked (GlcNAc...) asparagine glycan is attached at asparagine 250.

Belongs to the arthropod phospholipase D family. Class II subfamily. Requires Mg(2+) as cofactor. In terms of tissue distribution, expressed by the venom gland.

The protein resides in the secreted. The catalysed reaction is an N-(acyl)-sphingosylphosphocholine = an N-(acyl)-sphingosyl-1,3-cyclic phosphate + choline. It catalyses the reaction an N-(acyl)-sphingosylphosphoethanolamine = an N-(acyl)-sphingosyl-1,3-cyclic phosphate + ethanolamine. It carries out the reaction a 1-acyl-sn-glycero-3-phosphocholine = a 1-acyl-sn-glycero-2,3-cyclic phosphate + choline. The enzyme catalyses a 1-acyl-sn-glycero-3-phosphoethanolamine = a 1-acyl-sn-glycero-2,3-cyclic phosphate + ethanolamine. Its function is as follows. Dermonecrotic toxins cleave the phosphodiester linkage between the phosphate and headgroup of certain phospholipids (sphingolipid and lysolipid substrates), forming an alcohol (often choline) and a cyclic phosphate. This toxin acts on sphingomyelin (SM). It may also act on ceramide phosphoethanolamine (CPE), lysophosphatidylcholine (LPC) and lysophosphatidylethanolamine (LPE), but not on lysophosphatidylserine (LPS), and lysophosphatidylglycerol (LPG). It acts by transphosphatidylation, releasing exclusively cyclic phosphate products as second products. Induces dermonecrosis, hemolysis, increased vascular permeability, edema, inflammatory response, and platelet aggregation. The sequence is that of Dermonecrotic toxin LdSicTox-alphaIB1bii from Loxosceles deserta (Desert recluse spider).